The primary structure comprises 340 residues: Deubiquitinase SseL (340 aa).

The active site involves H223. C285 serves as the catalytic Nucleophile.

This sequence belongs to the peptidase C79 family.

It is found in the secreted. The protein localises to the host cytoplasm. Its function is as follows. Effector proteins function to alter host cell physiology and promote bacterial survival in host tissues. This protease targets the host cell ubiquitin pathway by acting as a deubiquitinase in infected host cells. Specifically hydrolyzes mono- and polyubiquitin substrates in vitro with a preference for 'Lys-63'-linked ubiquitin chains, suggesting that it interferes with a signaling pathway rather than inhibiting proteasomal-dependent degradation of its targets. Does not possess desumoylating activity. Is required for the Salmonella-induced delayed cytotoxicity in macrophages and full virulence. Is not required for intracellular bacterial replication. The polypeptide is Deubiquitinase SseL (sseL) (Salmonella typhimurium (strain LT2 / SGSC1412 / ATCC 700720)).